The following is a 397-amino-acid chain: Phosphoglycerate kinase (397 aa).

Substrate contacts are provided by residues 19–21 (DFN), Arg35, 58–61 (HLGR), Arg117, and Arg150. ATP is bound by residues Lys201, Glu323, and 349–352 (GGDS).

The protein belongs to the phosphoglycerate kinase family. As to quaternary structure, monomer.

It localises to the cytoplasm. It catalyses the reaction (2R)-3-phosphoglycerate + ATP = (2R)-3-phospho-glyceroyl phosphate + ADP. It participates in carbohydrate degradation; glycolysis; pyruvate from D-glyceraldehyde 3-phosphate: step 2/5. The polypeptide is Phosphoglycerate kinase (Syntrophobacter fumaroxidans (strain DSM 10017 / MPOB)).